The sequence spans 158 residues: ATP synthase subunit b' (158 aa).

Residues 24 to 44 (ATLPLMAVQILVLVFLLNAVF) form a helical membrane-spanning segment.

Belongs to the ATPase B chain family. As to quaternary structure, F-type ATPases have 2 components, F(1) - the catalytic core - and F(0) - the membrane proton channel. F(1) has five subunits: alpha(3), beta(3), gamma(1), delta(1), epsilon(1). F(0) has four main subunits: a(1), b(1), b'(1) and c(10-14). The alpha and beta chains form an alternating ring which encloses part of the gamma chain. F(1) is attached to F(0) by a central stalk formed by the gamma and epsilon chains, while a peripheral stalk is formed by the delta, b and b' chains.

It is found in the cellular thylakoid membrane. In terms of biological role, f(1)F(0) ATP synthase produces ATP from ADP in the presence of a proton or sodium gradient. F-type ATPases consist of two structural domains, F(1) containing the extramembraneous catalytic core and F(0) containing the membrane proton channel, linked together by a central stalk and a peripheral stalk. During catalysis, ATP synthesis in the catalytic domain of F(1) is coupled via a rotary mechanism of the central stalk subunits to proton translocation. Component of the F(0) channel, it forms part of the peripheral stalk, linking F(1) to F(0). The b'-subunit is a diverged and duplicated form of b found in plants and photosynthetic bacteria. The sequence is that of ATP synthase subunit b' from Synechococcus elongatus (strain ATCC 33912 / PCC 7942 / FACHB-805) (Anacystis nidulans R2).